The primary structure comprises 196 residues: Molybdenum cofactor guanylyltransferase (196 aa).

GTP-binding positions include 10–12 (LAG), K23, N51, D69, and D99. A Mg(2+)-binding site is contributed by D99.

This sequence belongs to the MobA family. In terms of assembly, monomer. Requires Mg(2+) as cofactor.

It is found in the cytoplasm. It carries out the reaction Mo-molybdopterin + GTP + H(+) = Mo-molybdopterin guanine dinucleotide + diphosphate. Transfers a GMP moiety from GTP to Mo-molybdopterin (Mo-MPT) cofactor (Moco or molybdenum cofactor) to form Mo-molybdopterin guanine dinucleotide (Mo-MGD) cofactor. The chain is Molybdenum cofactor guanylyltransferase from Shewanella baltica (strain OS155 / ATCC BAA-1091).